Consider the following 610-residue polypeptide: Phragmoplastin DRP1A (610 aa).

Residue Met1 is modified to N-acetylmethionine. Residues 31-300 enclose the Dynamin-type G domain; it reads WDSLPAIAVV…LERVIKSRIP (270 aa). Residues 41–48 are G1 motif; it reads GGQSSGKS. 44–49 contacts GTP; it reads SSGKSS. Residues 67 to 69 are G2 motif; sequence VTR. The segment at 142-145 is G3 motif; it reads DLPG. Residues 211 to 214 are G4 motif; the sequence is TKID. GTP-binding positions include 212 to 217 and 242 to 245; these read KIDLMD and NRSQ. The interval 241–244 is G5 motif; sequence VNRS. Residues 518–610 form the GED domain; the sequence is LRRIGSNVLS…SEIDAVAWSK (93 aa).

It belongs to the TRAFAC class dynamin-like GTPase superfamily. Dynamin/Fzo/YdjA family. In terms of assembly, forms homodimer and may homooligomerize and heterooligomerize to form the phragmoplastin complex. Interacts with AGD3/VAN3. May interact with CALS1. Binds to AHK2. Binds to SH3P2. Forms a complex made of SH3P2 and DRP1A and triggers its accumulation at the cell plate. Interacts with DRP2B at the plasma membrane and in forming clathrin-coated vesicles (CCV). Binds to PHIP1. As to expression, ubiquitous. Expressed in leaves (at protein level).

The protein localises to the cytoplasm. Its subcellular location is the cytoskeleton. It localises to the phragmoplast. It is found in the cell cortex. The protein resides in the cytoplasmic vesicle. The protein localises to the clathrin-coated vesicle. Its subcellular location is the cell membrane. It carries out the reaction GTP + H2O = GDP + phosphate + H(+). Functionally, microtubule-associated force-producing protein that is targeted to at the leading edges of the forming cell plate during cytokinesis. Also plays a major role in plasma membrane maintenance and cell wall integrity with implications in vesicular trafficking, polar cell expansion, vascular formation, and other aspects of plant growth and development, including stigmatic papillae expansion. Collaboratively with DRP2B, participates in clathrin-coated vesicle formation during endocytosis. Necessary for BOR1 polar localization in low-boron (B) conditions as well as for BOR1 endocytosis and subsequent degradation under high-concentration of boron. Has a GTPase activity. Required for the sterols-dependent dynamic high lipid order observed at the cell plate of dividing cells. Together with SH3P2, converts the fused vesicles to tubular structures at the cell plate and phragmoplasts during cytokinesis. With DRP2B and PIP5K3, required for the precise coordination of polar ARAC3/ROP6 and ARAC4/ROP2 placement and subsequent root hair positioning during planar polarity formation in root hair-forming cells, probably by mediating the correct basal-to-planar polarity switching of D6PK into the polar, lipid-enriched domain. Involved in endocytosis required for cellulose deposition during cell wall formation and elongation. Interacts with plasma membrane-mimetic liposomes and induces their clustering. This Arabidopsis thaliana (Mouse-ear cress) protein is Phragmoplastin DRP1A.